We begin with the raw amino-acid sequence, 41 residues long: Photosystem I reaction center subunit IX (41 aa).

Residues 7 to 27 (YLSVAPVLSTLWFGALAGLLI) traverse the membrane as a helical segment.

Belongs to the PsaJ family.

Its subcellular location is the plastid. It localises to the chloroplast thylakoid membrane. Its function is as follows. May help in the organization of the PsaE and PsaF subunits. This chain is Photosystem I reaction center subunit IX, found in Jasminum nudiflorum (Winter jasmine).